An 86-amino-acid chain; its full sequence is Large ribosomal subunit protein eL43 (86 aa).

Residues Cys-38, Cys-41, Cys-56, and Cys-59 each coordinate Zn(2+). Residues 38–59 (CPVCGRKAVRRISTGIWQCQKC) form a C4-type zinc finger.

This sequence belongs to the eukaryotic ribosomal protein eL43 family. In terms of assembly, part of the 50S ribosomal subunit. Zn(2+) serves as cofactor.

The protein is Large ribosomal subunit protein eL43 of Thermococcus kodakarensis (strain ATCC BAA-918 / JCM 12380 / KOD1) (Pyrococcus kodakaraensis (strain KOD1)).